A 355-amino-acid chain; its full sequence is Proto-oncogene Wnt-3 (355 aa).

Residues 1–21 (MEPHLLGLLLGLLLSGTRVLA) form the signal peptide. Disulfide bonds link Cys-80/Cys-91, Cys-131/Cys-139, Cys-141/Cys-158, Cys-206/Cys-220, Cys-208/Cys-215, Cys-284/Cys-315, Cys-300/Cys-310, Cys-314/Cys-354, Cys-330/Cys-345, Cys-332/Cys-342, and Cys-337/Cys-338. Residue Asn-90 is glycosylated (N-linked (GlcNAc...) asparagine). Residue Ser-212 is the site of O-palmitoleoyl serine; by PORCN attachment. A glycan (N-linked (GlcNAc...) asparagine) is linked at Asn-301.

The protein belongs to the Wnt family. As to quaternary structure, forms a soluble 1:1 complex with AFM; this prevents oligomerization and is required for prolonged biological activity. The complex with AFM may represent the physiological form in body fluids. Interacts with PORCN. Interacts with WLS. Post-translationally, palmitoleoylation is required for efficient binding to frizzled receptors. Depalmitoleoylation leads to Wnt signaling pathway inhibition. In terms of tissue distribution, detected at low levels in adult brain. Dorsal portion of the neural tube, dorsal ectoderm, the branchial arches, and the limb buds.

The protein resides in the secreted. It localises to the extracellular space. It is found in the extracellular matrix. In terms of biological role, ligand for members of the frizzled family of seven transmembrane receptors. Functions in the canonical Wnt signaling pathway that results in activation of transcription factors of the TCF/LEF family. Required for normal gastrulation, formation of the primitive streak, and for the formation of the mesoderm during early embryogenesis. Required for normal formation of the apical ectodermal ridge and for normal embryonic limb development. The sequence is that of Proto-oncogene Wnt-3 (Wnt3) from Mus musculus (Mouse).